The sequence spans 1063 residues: Structural polyprotein (1063 aa).

Positions 23–131 are disordered; it reads LRAELAAGAS…LGPPTNPFQA (109 aa). The human C1QBP/SF2P32-binding stretch occupies residues 30-69; the sequence is GASQLRRPRPPRQRDSSTSGDDSGRDSGGPRRRRGNRGRG. Position 46 is a phosphoserine; by host (serine 46). Over residues 59-69 the composition is skewed to basic residues; it reads PRRRRGNRGRG. A compositionally biased stretch (basic and acidic residues) spans 70-87; it reads QRKDWSKAPPPPEERQES. Residues 93–107 show a composition bias toward pro residues; that stretch reads VPKPPRAPPQPPQPP. Cysteine 153 and cysteine 197 are disulfide-bonded. The interval 279 to 300 is functions as E2 signal peptide; it reads GAPQVFLAGLLLAAVAVGTARA. The Extracellular segment spans residues 301–534; sequence GLQPRTDIAA…LWLATANALS (234 aa). The tract at residues 305 to 327 is disordered; that stretch reads RTDIAAPPAPPQAPRAHGKHYGH. N-linked (GlcNAc...) asparagine; by host glycosylation is found at asparagine 353, asparagine 371, asparagine 410, and asparagine 429. The chain crosses the membrane as a helical span at residues 535-555; the sequence is LDHALAAVVLLVPWVLIFMLC. Residues 556–582 lie on the Cytoplasmic side of the membrane; it reads RRACRRRGAAAALTAVVLQGYNPPAYG. The segment at 562–582 is functions as E1 signal peptide; the sequence is RGAAAALTAVVLQGYNPPAYG. The Extracellular segment spans residues 583–1028; sequence EEAFTYLCTA…QTWAEWAAAH (446 aa). 8 disulfide bridges follow: cysteine 590-cysteine 595, cysteine 619-cysteine 824, cysteine 641-cysteine 653, cysteine 699-cysteine 712, cysteine 758-cysteine 767, cysteine 807-cysteine 817, cysteine 931-cysteine 934, and cysteine 950-cysteine 983. The N-linked (GlcNAc...) asparagine; by host glycan is linked to asparagine 658. Ca(2+) contacts are provided by asparagine 670 and alanine 671. Ca(2+)-binding residues include aspartate 718 and threonine 719. Residues asparagine 759 and asparagine 791 are each glycosylated (N-linked (GlcNAc...) asparagine; by host). O-linked (GalNAc...) threonine; by host glycans are attached at residues threonine 1011 and threonine 1012. The chain crosses the membrane as a helical span at residues 1029–1049; the sequence is WWQLTLGAICALLLAGLLACC. Over 1050–1063 the chain is Extracellular; the sequence is AKCLYHLRGAIAPR.

As to quaternary structure, homodimer; further assembles into homooligomer. Interacts with human C1QBP. Interacts (via N-terminus) with protease/methyltransferase p150. Heterodimer with spike glycoprotein E2. In terms of assembly, heterodimer with spike glycoprotein E1. In terms of processing, structural polyprotein: Specific enzymatic cleavages in vivo yield mature proteins. Two signal peptidase-mediated cleavages within the polyprotein produce the structural proteins capsid, E2, and E1. The E2 signal peptide remains attached to the C-terminus of the capsid protein after cleavage by the signal peptidase. Another signal peptide at E2 C-terminus directs E1 to the ER, with a similar mechanism. Contains three N-linked oligosaccharides. Post-translationally, capsid is phosphorylated on Ser-46 by host. This phosphorylation negatively regulates capsid protein RNA-binding activity. Dephosphorylated by human PP1A.

Its subcellular location is the virion. The protein resides in the host cytoplasm. It localises to the host mitochondrion. The protein localises to the virion membrane. It is found in the host Golgi apparatus membrane. In terms of biological role, capsid protein interacts with genomic RNA and assembles into icosahedric core particles 65-70 nm in diameter. The resulting nucleocapsid eventually associates with the cytoplasmic domain of E2 at the cell membrane, leading to budding and formation of mature virions from host Golgi membranes. Phosphorylation negatively regulates RNA-binding activity, possibly delaying virion assembly during the viral replication phase. Capsid protein dimerizes and becomes disulfide-linked in the virion. Modulates genomic RNA replication. Modulates subgenomic RNA synthesis by interacting with human C1QBP/SF2P32. Induces both perinuclear clustering of mitochondria and the formation of electron-dense intermitochondrial plaques, both hallmarks of rubella virus infected cells. Induces apoptosis when expressed in transfected cells. Responsible for viral attachment to target host cell, by binding to the cell receptor. Its transport to the plasma membrane depends on interaction with E1 protein. The surface glycoproteins display an irregular helical organization and a pseudo-tetrameric inner nucleocapsid arrangement. Functionally, class II viral fusion protein. Fusion activity is inactive as long as E1 is bound to E2 in mature virion. After virus attachment to target cell and clathrin-mediated endocytosis, acidification of the endosome would induce dissociation of E1/E2 heterodimer and concomitant trimerization of the E1 subunits. This E1 homotrimer is fusion active, and promotes release of viral nucleocapsid in cytoplasm after endosome and viral membrane fusion. The cytoplasmic tail of spike glycoprotein E1 modulates virus release. The surface glycoproteins display an irregular helical organization and a pseudo-tetrameric inner nucleocapsid arrangement. The protein is Structural polyprotein of Homo sapiens (Human).